The primary structure comprises 142 residues: Ribosomal RNA large subunit methyltransferase H (142 aa).

Residue Gly89 coordinates S-adenosyl-L-methionine.

It belongs to the RNA methyltransferase RlmH family. In terms of assembly, homodimer.

It is found in the cytoplasm. The catalysed reaction is pseudouridine(1915) in 23S rRNA + S-adenosyl-L-methionine = N(3)-methylpseudouridine(1915) in 23S rRNA + S-adenosyl-L-homocysteine + H(+). Specifically methylates the pseudouridine at position 1915 (m3Psi1915) in 23S rRNA. This is Ribosomal RNA large subunit methyltransferase H from Zymomonas mobilis subsp. mobilis (strain ATCC 31821 / ZM4 / CP4).